Consider the following 503-residue polypeptide: Discoidin, CUB and LCCL domain-containing protein 1 (503 aa).

The first 25 residues, 1–25 (MGTGAGGPSVLALLFAVCAPLRLQA), serve as a signal peptide directing secretion. Residues 26–250 (EELGDGCGHI…FTTPGMNITT (225 aa)) lie on the Extracellular side of the membrane. 4 disulfide bridges follow: Cys-32-Cys-59, Cys-85-Cys-103, Cys-149-Cys-165, and Cys-169-Cys-191. The 110-residue stretch at 32–141 (CGHIVTSQDS…RGFLLTYASS (110 aa)) folds into the CUB domain. Asn-55 is a glycosylation site (N-linked (GlcNAc...) asparagine). The LCCL domain maps to 143–239 (HPDLITCLER…RHGSLSEKRF (97 aa)). N-linked (GlcNAc...) asparagine glycosylation occurs at Asn-247. A helical membrane pass occupies residues 251 to 271 (VAIPSVIFIALLLTGMGIFAI). Residues 272-503 (CRKRKKKGNP…LNQTAMTALL (232 aa)) are Cytoplasmic-facing. Ser-305 carries the post-translational modification Phosphoserine. Thr-406 is subject to Phosphothreonine. The tract at residues 410-503 (QSGYRVPGPR…LNQTAMTALL (94 aa)) is disordered. Over residues 494–503 (LNQTAMTALL) the composition is skewed to polar residues.

It localises to the membrane. The sequence is that of Discoidin, CUB and LCCL domain-containing protein 1 (Dcbld1) from Mus musculus (Mouse).